The following is a 426-amino-acid chain: Serine/threonine-protein kinase SRPK (426 aa).

Over residues 1 to 23 (MENIFKEKEKGKEKAKEEEKEND) the composition is skewed to basic and acidic residues. The interval 1–40 (MENIFKEKEKGKEKAKEEEKENDSGDLFDSEDEGTEDYKK) is disordered. The segment covering 24–35 (SGDLFDSEDEGT) has biased composition (acidic residues). In terms of domain architecture, Protein kinase spans 56 to 419 (YRIVKKLGWG…ARDSLEHPYM (364 aa)). ATP-binding positions include 62 to 70 (LGWGHFSTV) and K86. D188 functions as the Proton acceptor in the catalytic mechanism. Residues 318–328 (PKKGDKYDKTD) carry the Nuclear localization signal motif.

This sequence belongs to the protein kinase superfamily. CMGC Ser/Thr protein kinase family.

It is found in the nucleus. It catalyses the reaction L-seryl-[protein] + ATP = O-phospho-L-seryl-[protein] + ADP + H(+). The catalysed reaction is L-threonyl-[protein] + ATP = O-phospho-L-threonyl-[protein] + ADP + H(+). Its function is as follows. Phosphorylates serine/arginine-rich protein PSR. This chain is Serine/threonine-protein kinase SRPK, found in Physarum polycephalum (Slime mold).